We begin with the raw amino-acid sequence, 273 residues long: Large ribosomal subunit protein uL29m (273 aa).

Basic and acidic residues predominate over residues Pro247 to Glu258. The segment at Pro247 to Asn273 is disordered.

This sequence belongs to the universal ribosomal protein uL29 family. As to quaternary structure, component of the mitochondrial large ribosomal subunit. Mature mitochondrial ribosomes consist of a small (37S) and a large (54S) subunit. The 37S subunit contains at least 33 different proteins and 1 molecule of RNA (15S). The 54S subunit contains at least 45 different proteins and 1 molecule of RNA (21S).

The protein resides in the mitochondrion. This Aspergillus niger (strain ATCC MYA-4892 / CBS 513.88 / FGSC A1513) protein is Large ribosomal subunit protein uL29m (mrpl4).